The following is a 100-amino-acid chain: MLEHVLVLSAYLFSVGLYGLITSRNMVRALICLELIFNAVNINFVTFSDFFDSRHLKGSIFAIFVIAIAAAEAAIGLAILSAIYRNRKSIHINQSNLLTK.

3 helical membrane-spanning segments follow: residues 1–21 (MLEH…YGLI), 31–51 (ICLE…SDFF), and 60–80 (IFAI…LAIL).

The protein belongs to the complex I subunit 4L family. As to quaternary structure, NDH is composed of at least 16 different subunits, 5 of which are encoded in the nucleus.

It is found in the plastid. Its subcellular location is the chloroplast thylakoid membrane. It catalyses the reaction a plastoquinone + NADH + (n+1) H(+)(in) = a plastoquinol + NAD(+) + n H(+)(out). The enzyme catalyses a plastoquinone + NADPH + (n+1) H(+)(in) = a plastoquinol + NADP(+) + n H(+)(out). Functionally, NDH shuttles electrons from NAD(P)H:plastoquinone, via FMN and iron-sulfur (Fe-S) centers, to quinones in the photosynthetic chain and possibly in a chloroplast respiratory chain. The immediate electron acceptor for the enzyme in this species is believed to be plastoquinone. Couples the redox reaction to proton translocation, and thus conserves the redox energy in a proton gradient. In Trachelium caeruleum (Blue throatwort), this protein is NAD(P)H-quinone oxidoreductase subunit 4L, chloroplastic.